The sequence spans 103 residues: Matrix Gla protein (103 aa).

The signal sequence occupies residues 1-19 (MKSLLPLAILAALAVAALC). E21 carries the 4-carboxyglutamate modification. 3 positions are modified to phosphoserine: S22, S25, and S28. The region spanning 51–97 (HAKAQERVRELNKPAQEINREACDDYKLCERYALIYGYNAAYNRYFR) is the Gla domain. Residues E56, E60, E67, and E71 each carry the 4-carboxyglutamate modification. The cysteines at positions 73 and 79 are disulfide-linked.

This sequence belongs to the osteocalcin/matrix Gla protein family. Requires vitamin K-dependent gamma-carboxylation for its function.

It is found in the secreted. Its function is as follows. Associates with the organic matrix of bone and cartilage. Thought to act as an inhibitor of bone formation. This Rattus norvegicus (Rat) protein is Matrix Gla protein (Mgp).